Reading from the N-terminus, the 117-residue chain is Large ribosomal subunit protein bL20 (117 aa).

This sequence belongs to the bacterial ribosomal protein bL20 family.

Binds directly to 23S ribosomal RNA and is necessary for the in vitro assembly process of the 50S ribosomal subunit. It is not involved in the protein synthesizing functions of that subunit. In Leptospira interrogans serogroup Icterohaemorrhagiae serovar copenhageni (strain Fiocruz L1-130), this protein is Large ribosomal subunit protein bL20.